Consider the following 215-residue polypeptide: 3-demethoxyubiquinol 3-hydroxylase (215 aa).

6 residues coordinate Fe cation: E64, E94, H97, E146, E178, and H181.

The protein belongs to the COQ7 family. Requires Fe cation as cofactor.

The protein localises to the cell membrane. It catalyses the reaction a 5-methoxy-2-methyl-3-(all-trans-polyprenyl)benzene-1,4-diol + AH2 + O2 = a 3-demethylubiquinol + A + H2O. Its pathway is cofactor biosynthesis; ubiquinone biosynthesis. Catalyzes the hydroxylation of 2-nonaprenyl-3-methyl-6-methoxy-1,4-benzoquinol during ubiquinone biosynthesis. The sequence is that of 3-demethoxyubiquinol 3-hydroxylase from Pseudomonas putida (strain GB-1).